The chain runs to 375 residues: MKNNSHNAKQAPSKAAKPKHDNDVNKAKPKRVKKKAAVKAKLSAEKSDVDFIKIAKSGLHESNAHRGRYDFKKLIASEPALASFVIKNPKGEDSINFSDPNAVKMLNKALLAAYYNIDFWDIPEHYLCPPIPGRADYIHRVAELLDGEVKGKYRHQNVRALDVGVGANCIYPIVGVTQYGWHYTGSDVDPKSIDSAANIVERNVALNGKIELVQQMSESHIYRGVIKPNDRFDVTTCNPPFHRSAEDAAMGSQRKLDNLKANQRKKGVKQQNSPVKQGKPTLNFGGQNAELWCEGGEAAFIRRMANESQAFSSQVLWFTTLISKKDNVRPMRKQLEKLGVKAIRVVEMSQGQKISRFMAWSFMDKQQRKTWIELK.

Disordered stretches follow at residues 1–39 and 262–281; these read MKNN…AAVK and NQRK…GKPT. Over residues 27–38 the composition is skewed to basic residues; the sequence is AKPKRVKKKAAV.

It belongs to the methyltransferase superfamily. METTL16/RlmF family.

It is found in the cytoplasm. The catalysed reaction is adenosine(1618) in 23S rRNA + S-adenosyl-L-methionine = N(6)-methyladenosine(1618) in 23S rRNA + S-adenosyl-L-homocysteine + H(+). In terms of biological role, specifically methylates the adenine in position 1618 of 23S rRNA. The chain is Ribosomal RNA large subunit methyltransferase F from Vibrio parahaemolyticus serotype O3:K6 (strain RIMD 2210633).